The following is a 400-amino-acid chain: Phosphoglycerate kinase (400 aa).

Substrate is bound by residues 19–21, R38, 61–64, R124, and R161; these read DLN and HLGR. ATP contacts are provided by residues K211, G299, E330, and 356 to 359; that span reads GGDS.

The protein belongs to the phosphoglycerate kinase family. As to quaternary structure, monomer.

It localises to the cytoplasm. The enzyme catalyses (2R)-3-phosphoglycerate + ATP = (2R)-3-phospho-glyceroyl phosphate + ADP. It participates in carbohydrate degradation; glycolysis; pyruvate from D-glyceraldehyde 3-phosphate: step 2/5. The polypeptide is Phosphoglycerate kinase (Frankia alni (strain DSM 45986 / CECT 9034 / ACN14a)).